The chain runs to 294 residues: Ribosomal RNA small subunit methyltransferase A (294 aa).

Positions 31, 33, 58, 79, 104, and 129 each coordinate S-adenosyl-L-methionine.

Belongs to the class I-like SAM-binding methyltransferase superfamily. rRNA adenine N(6)-methyltransferase family. RsmA subfamily.

The protein resides in the cytoplasm. It carries out the reaction adenosine(1518)/adenosine(1519) in 16S rRNA + 4 S-adenosyl-L-methionine = N(6)-dimethyladenosine(1518)/N(6)-dimethyladenosine(1519) in 16S rRNA + 4 S-adenosyl-L-homocysteine + 4 H(+). Its function is as follows. Specifically dimethylates two adjacent adenosines (A1518 and A1519) in the loop of a conserved hairpin near the 3'-end of 16S rRNA in the 30S particle. May play a critical role in biogenesis of 30S subunits. The chain is Ribosomal RNA small subunit methyltransferase A from Oceanobacillus iheyensis (strain DSM 14371 / CIP 107618 / JCM 11309 / KCTC 3954 / HTE831).